The following is a 1188-amino-acid chain: NF-X1-type zinc finger protein NFXL1 (1188 aa).

The span at M1–H15 shows a compositional bias: basic and acidic residues. Disordered regions lie at residues M1–D52 and Q65–E195. Composition is skewed to polar residues over residues H19 to V34 and A168 to V186. The RING-type; degenerate zinc-finger motif lies at C223–Q279. 9 NF-X1-type zinc fingers span residues C335–A353, C390–V409, C454–L473, C513–V532, C572–K607, C611–E630, C668–T686, C721–Q751, and C760–F781. The 70-residue stretch at P894–A963 folds into the R3H domain. A disordered region spans residues S1100–E1188. Polar residues-rich tracts occupy residues A1126–R1138 and E1159–K1169.

The protein belongs to the NFX1 family. Expressed in seedlings, roots, stems, leaves, buds, flowers and siliques.

It is found in the nucleus. The protein operates within protein modification; protein ubiquitination. Functionally, mediates E2-dependent ubiquitination. Confers resistance to osmotic stress such as high salinity. Promotes H(2)O(2) production. Negative regulator of some defense-related genes via an salicylic acid (SA)-dependent signaling pathway. Confers susceptibility to the compatible phytopathogen Pseudomonas syringae pv. tomato strain DC3000 (Pst DC3000). Mediates resistance to type A trichothecenes (phytotoxins produced by phytopathogenic fungi). The chain is NF-X1-type zinc finger protein NFXL1 (NFXL1) from Arabidopsis thaliana (Mouse-ear cress).